The primary structure comprises 691 residues: MARSPVEPPASQPAKRAAWLRAELERANYAYYVLDQPDLPDAEYDRLFVELQRIEAEHPDLVTPDSPTQRVGGEAASGFTPVVHDKPMLSLNNGFADEDVIAFDKRVADGLDKATDLAGTVTEPVEYACELKFDGLAISLRYENGRFVQASTRGDGTTGEDVTENIRTIRAIPLTLKGKRIPRMLDVRGEVLMFKRDFARLNERQRAAGQREFANPRNAAAGSLRQLDSKITASRPLSFFAYGIGVLDGADMPDTHSGLLDWYETLGLPVNRERAVVRGAAGLLAFFHSVGERRESLPYDIDGVVYKVNRRDEQDRLGFVSRAPRFALAHKFPAQEALTKLIAIDVQVGRTGAITPVARLEPVFVGGATVTNATLHNEDEVRRKDIRIGDTVIVRRAGDVIPEVVSAVLDRRPADAQEFVMPTECPECGSRIERLPDEAIARCTGGLFCPAQRKQALWHFAQRRALDIDGLGEKIIDQLVEQNLVRTPADLFNLGFSTLVALDRFAEKSARNLIDSLEKAKHTTLARFIYALGIRHVGESTAKDLAKHFGSLDPIMDAPIDALLEVNDVGPIVAESIHQFFAEEHNRTVIEQLRARGKVTWPEGPPAPRAPQGVLAGKTVVLTGTLPTLTREAAKEMLEAAGAKVAGSVSKKTDYVVAGADAGSKLAKAEELGIPVLDEAGMHTLLEGHAR.

NAD(+) is bound by residues 41–45 (DAEYD), 90–91 (SL), and Glu-130. Catalysis depends on Lys-132, which acts as the N6-AMP-lysine intermediate. 4 residues coordinate NAD(+): Arg-153, Glu-190, Lys-307, and Lys-331. Zn(2+) is bound by residues Cys-425, Cys-428, Cys-443, and Cys-449. The 82-residue stretch at 610 to 691 (APQGVLAGKT…MHTLLEGHAR (82 aa)) folds into the BRCT domain.

This sequence belongs to the NAD-dependent DNA ligase family. LigA subfamily. Mg(2+) is required as a cofactor. It depends on Mn(2+) as a cofactor.

The enzyme catalyses NAD(+) + (deoxyribonucleotide)n-3'-hydroxyl + 5'-phospho-(deoxyribonucleotide)m = (deoxyribonucleotide)n+m + AMP + beta-nicotinamide D-nucleotide.. DNA ligase that catalyzes the formation of phosphodiester linkages between 5'-phosphoryl and 3'-hydroxyl groups in double-stranded DNA using NAD as a coenzyme and as the energy source for the reaction. It is essential for DNA replication and repair of damaged DNA. The sequence is that of DNA ligase from Burkholderia pseudomallei (strain 1106a).